Consider the following 669-residue polypeptide: Acyl-coenzyme A oxidase 1 (669 aa).

The FAD site is built by Thr152 and Gly191. Glu434 functions as the Proton acceptor in the catalytic mechanism. Tyr544 is modified (phosphotyrosine). Ser551 is subject to Phosphoserine. The short motif at 667–669 is the Microbody targeting signal element; the sequence is AHL.

Belongs to the acyl-CoA oxidase family. Homodimer. FAD is required as a cofactor. Expressed in glia.

Its subcellular location is the peroxisome. The protein resides in the nucleus. The enzyme catalyses a 2,3-saturated acyl-CoA + O2 = a (2E)-enoyl-CoA + H2O2. The protein operates within lipid metabolism; peroxisomal fatty acid beta-oxidation. Catalyzes the desaturation of acyl-CoAs to 2-trans-enoyl-CoAs. First enzyme of the fatty acid beta-oxidation pathway. This is Acyl-coenzyme A oxidase 1 from Drosophila melanogaster (Fruit fly).